Here is a 224-residue protein sequence, read N- to C-terminus: ATP-dependent dethiobiotin synthetase BioD (224 aa).

Threonine 18 provides a ligand contact to Mg(2+). The active site involves lysine 39. Residue serine 43 coordinates substrate. Residues aspartate 56 and glutamate 117 each coordinate Mg(2+). ATP-binding positions include aspartate 56, 117–120, and 177–178; these read EGVG and NE.

This sequence belongs to the dethiobiotin synthetase family. In terms of assembly, homodimer. Requires Mg(2+) as cofactor.

The protein localises to the cytoplasm. The catalysed reaction is (7R,8S)-7,8-diammoniononanoate + CO2 + ATP = (4R,5S)-dethiobiotin + ADP + phosphate + 3 H(+). It participates in cofactor biosynthesis; biotin biosynthesis; biotin from 7,8-diaminononanoate: step 1/2. Catalyzes a mechanistically unusual reaction, the ATP-dependent insertion of CO2 between the N7 and N8 nitrogen atoms of 7,8-diaminopelargonic acid (DAPA, also called 7,8-diammoniononanoate) to form a ureido ring. The chain is ATP-dependent dethiobiotin synthetase BioD from Xanthomonas euvesicatoria pv. vesicatoria (strain 85-10) (Xanthomonas campestris pv. vesicatoria).